Here is a 2430-residue protein sequence, read N- to C-terminus: Spatacsin (2430 aa).

2 positions are modified to phosphoserine: S1942 and S1943.

As to quaternary structure, interacts with AP5Z1, AP5B1, AP5S1 and ZFYVE26. As to expression, ubiquitously expressed at low level. Expressed in embryonic and adult cortical projection neurons.

The protein localises to the cytoplasm. Its subcellular location is the cytosol. The protein resides in the nucleus. It localises to the cell projection. It is found in the axon. The protein localises to the dendrite. Its subcellular location is the synapse. Its function is as follows. May play a role in neurite plasticity by maintaining cytoskeleton stability and regulating synaptic vesicle transport. The polypeptide is Spatacsin (Spg11) (Mus musculus (Mouse)).